The primary structure comprises 382 residues: Heme A synthase (382 aa).

A run of 8 helical transmembrane segments spans residues 25–45, 112–132, 141–161, 176–196, 211–231, 270–290, 303–323, and 327–347; these read GAVR…VAVG, LLGR…WARG, GLLG…IMVA, LALH…LAAG, VVAC…GLVA, LALV…VAIA, AAAG…GLGI, and LLHV…AVLI. H277 contacts heme. H338 contributes to the heme binding site.

The protein belongs to the COX15/CtaA family. Type 2 subfamily. As to quaternary structure, interacts with CtaB. Heme b is required as a cofactor.

The protein resides in the cell membrane. The enzyme catalyses Fe(II)-heme o + 2 A + H2O = Fe(II)-heme a + 2 AH2. Its pathway is porphyrin-containing compound metabolism; heme A biosynthesis; heme A from heme O: step 1/1. Its function is as follows. Catalyzes the conversion of heme O to heme A by two successive hydroxylations of the methyl group at C8. The first hydroxylation forms heme I, the second hydroxylation results in an unstable dihydroxymethyl group, which spontaneously dehydrates, resulting in the formyl group of heme A. The chain is Heme A synthase from Methylorubrum extorquens (strain CM4 / NCIMB 13688) (Methylobacterium extorquens).